The chain runs to 995 residues: DExH-box ATP-dependent RNA helicase DExH10 (995 aa).

The tract at residues 1–42 is disordered; it reads MSAQMEEPETLGKRKESESSKLRSDETPTPEPRTKRRSLKRA. At serine 2 the chain carries N-acetylserine. The span at 10–26 shows a compositional bias: basic and acidic residues; that stretch reads TLGKRKESESSKLRSDE. A Helicase ATP-binding domain is found at 90–246; it reads VACLERKESI…WICYLHKQPC (157 aa). 103-110 contacts ATP; sequence AHTSAGKT. Positions 194–197 match the DEIH box motif; it reads DEIH. The tract at residues 290–318 is disordered; the sequence is DTFPKPKSNDGKKSANGKSGGRGAKGGGG. The span at 307-318 shows a compositional bias: gly residues; it reads KSGGRGAKGGGG. Positions 323–524 constitute a Helicase C-terminal domain; sequence DVYKIVKMIM…LSYYTILNLL (202 aa).

The protein belongs to the DExH box helicase family. SKI2 subfamily. As to expression, expressed in inflorescences, leaves, stems, and roots.

Its subcellular location is the nucleus. The protein resides in the nucleoplasm. The catalysed reaction is ATP + H2O = ADP + phosphate + H(+). In terms of biological role, ATP-dependent RNA helicase that associates with the RNA exosome complex, with the cap binding complex (CBC) and with the NEXT-like complex. Involved in the degradation of a large number of non-coding nuclear exosome substrates such as snoRNA and miRNA precursors, incompletely spliced mRNAs, and spurious transcripts produced from pseudogenes and intergenic regions. Involved in the maintenance of homeotic B and C gene expression in the reproductive whorls. Regulates floral organ spacing and identity, probably through the regulation of protein synthesis or mRNA degradation. This Arabidopsis thaliana (Mouse-ear cress) protein is DExH-box ATP-dependent RNA helicase DExH10.